Here is a 613-residue protein sequence, read N- to C-terminus: Dihydroxy-acid dehydratase (613 aa).

Mg(2+) is bound at residue D81. C122 lines the [2Fe-2S] cluster pocket. Mg(2+)-binding residues include D123 and K124. K124 is modified (N6-carboxylysine). A [2Fe-2S] cluster-binding site is contributed by C193. A Mg(2+)-binding site is contributed by E489. S515 acts as the Proton acceptor in catalysis.

This sequence belongs to the IlvD/Edd family. Homodimer. [2Fe-2S] cluster is required as a cofactor. Requires Mg(2+) as cofactor.

The catalysed reaction is (2R)-2,3-dihydroxy-3-methylbutanoate = 3-methyl-2-oxobutanoate + H2O. It catalyses the reaction (2R,3R)-2,3-dihydroxy-3-methylpentanoate = (S)-3-methyl-2-oxopentanoate + H2O. It functions in the pathway amino-acid biosynthesis; L-isoleucine biosynthesis; L-isoleucine from 2-oxobutanoate: step 3/4. Its pathway is amino-acid biosynthesis; L-valine biosynthesis; L-valine from pyruvate: step 3/4. Functions in the biosynthesis of branched-chain amino acids. Catalyzes the dehydration of (2R,3R)-2,3-dihydroxy-3-methylpentanoate (2,3-dihydroxy-3-methylvalerate) into 2-oxo-3-methylpentanoate (2-oxo-3-methylvalerate) and of (2R)-2,3-dihydroxy-3-methylbutanoate (2,3-dihydroxyisovalerate) into 2-oxo-3-methylbutanoate (2-oxoisovalerate), the penultimate precursor to L-isoleucine and L-valine, respectively. The protein is Dihydroxy-acid dehydratase of Pseudomonas putida (strain W619).